The sequence spans 104 residues: uncharacterized protein (104 aa).

This is an uncharacterized protein from Acidithiobacillus ferridurans.